Reading from the N-terminus, the 145-residue chain is Methyl-coenzyme M reductase I operon protein D (145 aa).

As to quaternary structure, MCR is composed of three subunits: alpha, beta, and gamma. The function of proteins C and D is not known.

This Methanothermobacter thermautotrophicus (strain ATCC 29096 / DSM 1053 / JCM 10044 / NBRC 100330 / Delta H) (Methanobacterium thermoautotrophicum) protein is Methyl-coenzyme M reductase I operon protein D (mcrD).